The chain runs to 309 residues: Olfactory receptor 7A10 (309 aa).

Residues 1-25 (MKSWNNTIILEFLLLGISEEPELQA) are Extracellular-facing. Asparagine 5 is a glycosylation site (N-linked (GlcNAc...) asparagine). A helical transmembrane segment spans residues 26–46 (FLFGLFLSMYLVTVLGNLLII). At 47–54 (LATISDSH) the chain is on the cytoplasmic side. A helical transmembrane segment spans residues 55-75 (LHTPMYFFLSNLSFVDICFVS). Residues 76–99 (TTVPKMLVNIQTHNKVITYAGCIT) are Extracellular-facing. Cysteine 97 and cysteine 189 are disulfide-bonded. A helical membrane pass occupies residues 100–120 (QMCFFLLFVGLDNFLLTVMAY). Residues 121 to 139 (DRFVAICHPLHYMVIMNPQ) lie on the Cytoplasmic side of the membrane. A helical transmembrane segment spans residues 140–160 (LCGLLVLASWIMSVLNSMLQS). The Extracellular segment spans residues 161 to 197 (LMVLPLPFCTHMEIPHFFCEINQVVHLACSDTFLNDI). The helical transmembrane segment at 198–217 (VMYFAVALLGGGPLTGILYS) threads the bilayer. Residues 218 to 237 (YSKIVSSIRAISSAQGKYKA) are Cytoplasmic-facing. The chain crosses the membrane as a helical span at residues 238 to 258 (FSTCASHLSVVSLFYGTCLGV). Topologically, residues 259–271 (YLSSAATHNSHTG) are extracellular. Residues 272–292 (AAASVMYTVVTPMLNPFIYSL) form a helical membrane-spanning segment. Topologically, residues 293–309 (RNKHIKGAMKTFFRGKQ) are cytoplasmic.

Belongs to the G-protein coupled receptor 1 family.

It is found in the cell membrane. Odorant receptor. This Homo sapiens (Human) protein is Olfactory receptor 7A10 (OR7A10).